Consider the following 423-residue polypeptide: ER-bound oxygenase mpaB' (423 aa).

At Met1–Gln22 the chain is on the lumenal side. The helical transmembrane segment at Trp23–Leu41 threads the bilayer. Over Arg42 to His423 the chain is Cytoplasmic.

Belongs to the mpaB oxygenase family.

The protein resides in the endoplasmic reticulum membrane. The enzyme catalyses 4-farnesyl-3,5-dihydroxy-6-methylphthalide + AH2 + 2 O2 = (4E,8E)-10-(4,6-dihydroxy-7-methyl-3-oxo-1,3-dihydro-2-benzofuran-5-yl)-4,8-dimethyldeca-4,8-dienoate + acetone + A + H2O + H(+). The protein operates within secondary metabolite biosynthesis; terpenoid biosynthesis. ER-bound oxygenase; part of the gene cluster that mediates the biosynthesis of mycophenolic acid (MPA), the first isolated antibiotic natural product in the world obtained from a culture of Penicillium brevicompactum in 1893. MpaB' catalyzes the oxidative cleavage the C19-C20 double bond in farnesyl-DHMP (FDHMP) to yield FDHMP-3C via a mycophenolic aldehyde intermediate. The first step of the pathway is the synthesis of 5-methylorsellinic acid (5MOA) by the cytosolic polyketide synthase mpaC. 5MOA is then converted to the phthalide compound 5,7-dihydroxy-4,6-dimethylphthalide (DHMP) by the endoplasmic reticulum-bound cytochrome P450 monooxygenase mpaDE. MpaDE first catalyzes hydroxylation of 5-MOA to 4,6-dihydroxy-2-(hydroxymethyl)-3-methylbenzoic acid (DHMB). MpaDE then acts as a lactone synthase that catalyzes the ring closure to convert DHMB into DHMP. The next step is the prenylation of DHMP by the Golgi apparatus-associated prenyltransferase mpaA to yield farnesyl-DHMP (FDHMP). The ER-bound oxygenase mpaB then mediates the oxidative cleavage the C19-C20 double bond in FDHMP to yield FDHMP-3C via a mycophenolic aldehyde intermediate. The O-methyltransferase mpaG catalyzes the methylation of FDHMP-3C to yield MFDHMP-3C. After the cytosolic methylation of FDHMP-3C, MFDHMP-3C enters into peroxisomes probably via free diffusion due to its low molecular weight. Upon a peroxisomal CoA ligation reaction, catalyzed by a beta-oxidation component enzyme acyl-CoA ligase ACL891, MFDHMP-3C-CoA would then be restricted to peroxisomes for the following beta-oxidation pathway steps. The peroxisomal beta-oxidation machinery than converts MFDHMP-3C-CoA into MPA_CoA, via a beta-oxidation chain-shortening process. Finally mpaH acts as a peroxisomal acyl-CoA hydrolase with high substrate specificity toward MPA-CoA to release the final product MPA. In Penicillium brevicompactum, this protein is ER-bound oxygenase mpaB'.